The sequence spans 519 residues: Ribose import ATP-binding protein RbsA 2 (519 aa).

2 ABC transporter domains span residues 15–252 (FRLR…VGRP) and 262–506 (HEPG…TGVR). 47–54 (GENGAGKS) is a binding site for ATP.

It belongs to the ABC transporter superfamily. Ribose importer (TC 3.A.1.2.1) family. The complex is composed of an ATP-binding protein (RbsA), two transmembrane proteins (RbsC) and a solute-binding protein (RbsB).

It is found in the cell membrane. It catalyses the reaction D-ribose(out) + ATP + H2O = D-ribose(in) + ADP + phosphate + H(+). In terms of biological role, part of the ABC transporter complex RbsABC involved in ribose import. Responsible for energy coupling to the transport system. The polypeptide is Ribose import ATP-binding protein RbsA 2 (Rubrobacter xylanophilus (strain DSM 9941 / JCM 11954 / NBRC 16129 / PRD-1)).